The following is a 333-amino-acid chain: Na(+)/H(+) exchange regulatory cofactor NHE-RF1 (333 aa).

The PDZ 1 domain maps to 13-93 (LCCMEKGPDG…AVRLLVVQPQ (81 aa)). Disordered stretches follow at residues 90 to 164 (VQPQ…RAVD) and 232 to 333 (LAGP…FSNL). The segment covering 97–111 (QPPKTHSDPDGEAQR) has biased composition (basic and acidic residues). Residues 112-122 (EPPAAETPAAE) show a composition bias toward low complexity. Basic and acidic residues predominate over residues 124-133 (SGPEERELRP). In terms of domain architecture, PDZ 2 spans 135–215 (LCRIKKGPNG…ETKLLVVGVL (81 aa)). Composition is skewed to basic and acidic residues over residues 274–289 (SETH…DKRS) and 323–333 (WSKKNELFSNL).

The protein localises to the endomembrane system. Its subcellular location is the cell projection. The protein resides in the filopodium. It is found in the ruffle. It localises to the microvillus. In terms of biological role, scaffold protein that connects plasma membrane proteins with members of the ezrin/moesin/radixin family and thereby helps to link them to the actin cytoskeleton and to regulate their surface expression. Was first known to play a role in the regulation of the activity and subcellular location of SLC9A3. May enhance Wnt signaling. This is Na(+)/H(+) exchange regulatory cofactor NHE-RF1 (NHERF1) from Gallus gallus (Chicken).